Reading from the N-terminus, the 174-residue chain is Extracellular cysteine protease (174 aa).

Catalysis depends on residues cysteine 24, histidine 120, and asparagine 141.

The protein belongs to the peptidase C47 family. In terms of processing, proteolytically cleaved.

It localises to the secreted. Its subcellular location is the cell wall. Inhibited by heavy metal ions such as Zn(2+) or Ni(2+), iodoacetamide, N-ethylmaleimide, leupeptin, SDS and E-64. Also inhibited by chloromethylketones TPCK and TLCK and by human plasma inhibitor alpha-2-macroglobulin. Stimulated by L-cysteine. Cysteine protease able to cleave elastin, insulin, myoglobin, fibronectin, fibrinogen, HMW-kininogen, alpha-1-protease inhibitor and alpha-1-antitrypsin. Along with other extracellular proteases may contribute to the colonization and infection of human tissues. This is Extracellular cysteine protease (ecpA) from Staphylococcus epidermidis.